Consider the following 473-residue polypeptide: MKTLYSLRRFYHVETLFNGNLAVSGRDQETTGFAWWAGNARLINLSGKLLGAHVAHAGLIVFWAGAMNLFEVAHFVPEKPMYEQGLILLPHLATLGWGIGPGGEVVDTFPYFVSGVLHLISSAVLGFGGVYHALIGPETLEESFPFFGYVWKDKNKMTTILGIHLIILGLGAFLLVFKAVWFGGVYDTWAPGGGDVRKITNLTLNPGVIFGYLLKSPFGGEGWIVSVDNMEDIIGGHVWLGAICIFGGIWHILTKPFAWARRAFIWSGEAYLSYSLAAISMMGFIACCFVWFNNTAYPSEFYGPTGPEASQAQAFTFLVRDQRLGANVGSAQGPTGLGKYLMRSPTGEIIFGGETMRFWDLRAPWLEPLRGPNGLDLAKLKKDIQPWQERRSAEYMTHAPLGSLNSVGGVATEINAVNYVSPRSWLSTSHFVLGFFFFIAHLWHAGRARAAAAGFEKGIDRETEPVFFMNPLN.

A propeptide spanning residues 1-14 is cleaved from the precursor; the sequence is MKTLYSLRRFYHVE. At Thr15 the chain carries N-acetylthreonine. Thr15 is subject to Phosphothreonine. The next 5 helical transmembrane spans lie at 69 to 93, 134 to 155, 178 to 200, 255 to 275, and 291 to 312; these read LFEV…PHLA, LIGP…KDKN, KAVW…RKIT, KPFA…LSYS, and WFNN…ASQA. Residue Glu367 coordinates [CaMn4O5] cluster. Residues 447–471 form a helical membrane-spanning segment; it reads RARAAAAGFEKGIDRETEPVFFMNP.

The protein belongs to the PsbB/PsbC family. PsbC subfamily. PSII is composed of 1 copy each of membrane proteins PsbA, PsbB, PsbC, PsbD, PsbE, PsbF, PsbH, PsbI, PsbJ, PsbK, PsbL, PsbM, PsbT, PsbX, PsbY, PsbZ, Psb30/Ycf12, at least 3 peripheral proteins of the oxygen-evolving complex and a large number of cofactors. It forms dimeric complexes. Requires Binds multiple chlorophylls and provides some of the ligands for the Ca-4Mn-5O cluster of the oxygen-evolving complex. It may also provide a ligand for a Cl- that is required for oxygen evolution. PSII binds additional chlorophylls, carotenoids and specific lipids. as cofactor.

It is found in the plastid. The protein localises to the chloroplast thylakoid membrane. Functionally, one of the components of the core complex of photosystem II (PSII). It binds chlorophyll and helps catalyze the primary light-induced photochemical processes of PSII. PSII is a light-driven water:plastoquinone oxidoreductase, using light energy to abstract electrons from H(2)O, generating O(2) and a proton gradient subsequently used for ATP formation. This is Photosystem II CP43 reaction center protein from Staurastrum punctulatum (Green alga).